Consider the following 207-residue polypeptide: LexA repressor (207 aa).

A DNA-binding region (H-T-H motif) is located at residues 28 to 48; sequence RAEISRELGFKSANAAEEHLK. Catalysis depends on for autocatalytic cleavage activity residues serine 123 and lysine 160.

Belongs to the peptidase S24 family. As to quaternary structure, homodimer.

The enzyme catalyses Hydrolysis of Ala-|-Gly bond in repressor LexA.. Functionally, represses a number of genes involved in the response to DNA damage (SOS response), including recA and lexA. In the presence of single-stranded DNA, RecA interacts with LexA causing an autocatalytic cleavage which disrupts the DNA-binding part of LexA, leading to derepression of the SOS regulon and eventually DNA repair. This is LexA repressor from Haemophilus influenzae (strain 86-028NP).